The following is an 83-amino-acid chain: Cobrotoxin homolog (83 aa).

The signal sequence occupies residues 1 to 21 (METLLLTLLVVTIVCLDLGYT). 4 disulfide bridges follow: cysteine 24–cysteine 45, cysteine 38–cysteine 62, cysteine 64–cysteine 75, and cysteine 76–cysteine 81.

It belongs to the three-finger toxin family. Short-chain subfamily. Type I alpha-neurotoxin sub-subfamily. In terms of tissue distribution, expressed by the venom gland.

It is found in the secreted. Its function is as follows. Binds to muscle nicotinic acetylcholine receptor (nAChR) and inhibit acetylcholine from binding to the receptor, thereby impairing neuromuscular transmission. This Naja naja (Indian cobra) protein is Cobrotoxin homolog.